A 466-amino-acid polypeptide reads, in one-letter code: ATP synthase subunit beta (466 aa).

An ATP-binding site is contributed by 155–162 (GGAGVGKT).

Belongs to the ATPase alpha/beta chains family. As to quaternary structure, F-type ATPases have 2 components, CF(1) - the catalytic core - and CF(0) - the membrane proton channel. CF(1) has five subunits: alpha(3), beta(3), gamma(1), delta(1), epsilon(1). CF(0) has three main subunits: a(1), b(2) and c(9-12). The alpha and beta chains form an alternating ring which encloses part of the gamma chain. CF(1) is attached to CF(0) by a central stalk formed by the gamma and epsilon chains, while a peripheral stalk is formed by the delta and b chains.

Its subcellular location is the cell inner membrane. The enzyme catalyses ATP + H2O + 4 H(+)(in) = ADP + phosphate + 5 H(+)(out). Functionally, produces ATP from ADP in the presence of a proton gradient across the membrane. The catalytic sites are hosted primarily by the beta subunits. The sequence is that of ATP synthase subunit beta from Bordetella bronchiseptica (strain ATCC BAA-588 / NCTC 13252 / RB50) (Alcaligenes bronchisepticus).